A 156-amino-acid chain; its full sequence is Lipoprotein signal peptidase (156 aa).

Helical transmembrane passes span 5 to 25 (FKFI…DQWV), 64 to 84 (YLHL…KTLL), and 89 to 109 (IAFG…FIHG). Residues Asp113 and Asp130 contribute to the active site. A helical transmembrane segment spans residues 122–142 (NFAIFNVADVMINISVALILI).

Belongs to the peptidase A8 family.

The protein localises to the cell inner membrane. The catalysed reaction is Release of signal peptides from bacterial membrane prolipoproteins. Hydrolyzes -Xaa-Yaa-Zaa-|-(S,diacylglyceryl)Cys-, in which Xaa is hydrophobic (preferably Leu), and Yaa (Ala or Ser) and Zaa (Gly or Ala) have small, neutral side chains.. It functions in the pathway protein modification; lipoprotein biosynthesis (signal peptide cleavage). This protein specifically catalyzes the removal of signal peptides from prolipoproteins. The sequence is that of Lipoprotein signal peptidase from Campylobacter jejuni subsp. jejuni serotype O:23/36 (strain 81-176).